A 657-amino-acid polypeptide reads, in one-letter code: Translation factor GUF1, mitochondrial (657 aa).

Residues Met1–Arg21 constitute a mitochondrion transit peptide. The 185-residue stretch at Glu56–Thr240 folds into the tr-type G domain. GTP is bound by residues Ala65–Ser72, Asp132–His136, and Asn186–Asp189.

It belongs to the TRAFAC class translation factor GTPase superfamily. Classic translation factor GTPase family. LepA subfamily.

Its subcellular location is the mitochondrion inner membrane. It carries out the reaction GTP + H2O = GDP + phosphate + H(+). In terms of biological role, promotes mitochondrial protein synthesis. May act as a fidelity factor of the translation reaction, by catalyzing a one-codon backward translocation of tRNAs on improperly translocated ribosomes. Binds to mitochondrial ribosomes in a GTP-dependent manner. The protein is Translation factor GUF1, mitochondrial of Candida glabrata (strain ATCC 2001 / BCRC 20586 / JCM 3761 / NBRC 0622 / NRRL Y-65 / CBS 138) (Yeast).